Reading from the N-terminus, the 282-residue chain is Protein-glutamine deamidase Cif (282 aa).

A translocation domain (TD) region spans residues 1 to 16 (MKDITLPPPTSASCLT). Residues Cys109, His165, and Gln185 contribute to the active site.

The protein belongs to the Cif family.

It localises to the secreted. The protein resides in the host nucleus. The enzyme catalyses L-glutaminyl-[protein] + H2O = L-glutamyl-[protein] + NH4(+). Its function is as follows. Protein-glutamine deamidase effector that inhibits the host cell cycle and other key cellular processes such as the actin network and programmed-cell death. Acts by mediating the side chain deamidation of 'Gln-40' of host NEDD8, converting it to glutamate, thereby abolishing the activity of cullin-RING-based E3 ubiquitin-protein ligase complexes (CRL complexes). Inactivation of CRL complexes prevents ubiquitination and subsequent degradation of the cyclin-dependent kinase inhibitors CDKN1A/p21 and CDKN1B/p27, leading to G1 and G2 cell cycle arrests in host cells. Also able to catalyze deamidation of 'Gln-40' of host ubiquitin in vitro; however, NEDD8 constitutes the preferred substrate in vivo. This chain is Protein-glutamine deamidase Cif, found in Escherichia coli.